Here is a 398-residue protein sequence, read N- to C-terminus: Formate-dependent phosphoribosylglycinamide formyltransferase (398 aa).

N(1)-(5-phospho-beta-D-ribosyl)glycinamide is bound by residues 21 to 22 (EL) and E81. Residues R113, K154, 194–197 (EEYV), and E202 each bind ATP. Residues 118-314 (RFAAEKVKVP…EFQVHVRSAL (197 aa)) form the ATP-grasp domain. Residues E273 and E285 each contribute to the Mg(2+) site. N(1)-(5-phospho-beta-D-ribosyl)glycinamide-binding positions include D292, K362, and 369–370 (RR).

It belongs to the PurK/PurT family. Homodimer.

The enzyme catalyses N(1)-(5-phospho-beta-D-ribosyl)glycinamide + formate + ATP = N(2)-formyl-N(1)-(5-phospho-beta-D-ribosyl)glycinamide + ADP + phosphate + H(+). The protein operates within purine metabolism; IMP biosynthesis via de novo pathway; N(2)-formyl-N(1)-(5-phospho-D-ribosyl)glycinamide from N(1)-(5-phospho-D-ribosyl)glycinamide (formate route): step 1/1. Functionally, involved in the de novo purine biosynthesis. Catalyzes the transfer of formate to 5-phospho-ribosyl-glycinamide (GAR), producing 5-phospho-ribosyl-N-formylglycinamide (FGAR). Formate is provided by PurU via hydrolysis of 10-formyl-tetrahydrofolate. This chain is Formate-dependent phosphoribosylglycinamide formyltransferase, found in Sulfolobus acidocaldarius (strain ATCC 33909 / DSM 639 / JCM 8929 / NBRC 15157 / NCIMB 11770).